The sequence spans 231 residues: UPF0653 protein C607.02c (231 aa).

4 disordered regions span residues 1 to 33 (MPTK…VDDN), 47 to 68 (YHES…KKDY), 93 to 132 (SFKS…ENFE), and 147 to 178 (IESR…APPE). Positions 9-27 (SVLEAERKKIGLDHAPKED) are enriched in basic and acidic residues. 2 stretches are compositionally biased toward basic residues: residues 53–67 (KEIK…KKKD) and 109–119 (EKKKIAKRKEK).

The protein belongs to the UPF0653 family.

The protein localises to the nucleus. Its subcellular location is the nucleolus. This chain is UPF0653 protein C607.02c, found in Schizosaccharomyces pombe (strain 972 / ATCC 24843) (Fission yeast).